We begin with the raw amino-acid sequence, 451 residues long: Phosphoglucosamine mutase (451 aa).

The Phosphoserine intermediate role is filled by S101. Mg(2+) is bound by residues S101, D241, D243, and D245. Residue S101 is modified to Phosphoserine.

It belongs to the phosphohexose mutase family. The cofactor is Mg(2+). Activated by phosphorylation.

It catalyses the reaction alpha-D-glucosamine 1-phosphate = D-glucosamine 6-phosphate. Catalyzes the conversion of glucosamine-6-phosphate to glucosamine-1-phosphate. This is Phosphoglucosamine mutase from Exiguobacterium sibiricum (strain DSM 17290 / CCUG 55495 / CIP 109462 / JCM 13490 / 255-15).